The following is a 74-amino-acid chain: Putative defensin-like protein 12 (74 aa).

A signal peptide spans 1–26 (MAKPCAAFLVFLCLSMLILSIPDISC). 3 cysteine pairs are disulfide-bonded: C26-C50, C33-C59, and C39-C61.

It belongs to the DEFL family.

The protein resides in the secreted. In Arabidopsis thaliana (Mouse-ear cress), this protein is Putative defensin-like protein 12.